Consider the following 647-residue polypeptide: Neuronal PAS domain-containing protein 4-like (647 aa).

The segment at 16 to 29 is basic motif; degenerate; sequence KRFRSTKGASKARR. Residues 16–67 enclose the bHLH domain; the sequence is KRFRSTKGASKARRDQMNSEIRNLRALLPISPEHRLSYLHSMSITCTYIRKS. The segment at 30–67 is helix-loop-helix motif; that stretch reads DQMNSEIRNLRALLPISPEHRLSYLHSMSITCTYIRKS. PAS domains are found at residues 117 to 181 and 238 to 274; these read VLQA…SPSG and SADMRLASASSSVLFHLGFSADELIGRSWYELLHPDD.

As to quaternary structure, heterodimer; efficient DNA binding requires dimerization with another bHLH protein. Specifically expressed in endothelial and hematopoietic precursor cells.

The protein localises to the nucleus. Transcription factor specifically expressed in endothelial and hematopoietic precursor cells that acts as a key regulator of the endothelial differentiation cascade. Acts as an early-response transcription factor that regulates the expression of early regulators of endothelial and haematopoietic differentiation, such as etv2 and tal1. This is Neuronal PAS domain-containing protein 4-like from Danio rerio (Zebrafish).